Here is a 98-residue protein sequence, read N- to C-terminus: NADH-ubiquinone oxidoreductase chain 4L (98 aa).

3 helical membrane passes run 1-21 (MVLIKLNIIMAFMLALTGVLI), 36-56 (MMLSLFIFMAAVITHFHMFSI), and 61-81 (LILLVFSACEAGVGLALLVTI).

It belongs to the complex I subunit 4L family. In terms of assembly, core subunit of respiratory chain NADH dehydrogenase (Complex I) which is composed of 45 different subunits.

It localises to the mitochondrion inner membrane. The enzyme catalyses a ubiquinone + NADH + 5 H(+)(in) = a ubiquinol + NAD(+) + 4 H(+)(out). Functionally, core subunit of the mitochondrial membrane respiratory chain NADH dehydrogenase (Complex I) which catalyzes electron transfer from NADH through the respiratory chain, using ubiquinone as an electron acceptor. Part of the enzyme membrane arm which is embedded in the lipid bilayer and involved in proton translocation. The sequence is that of NADH-ubiquinone oxidoreductase chain 4L (MT-ND4L) from Metachirus nudicaudatus (Brown four-eyed opossum).